The following is a 396-amino-acid chain: Phosphopentomutase (396 aa).

Mn(2+) is bound by residues Asp13, Asp288, His293, Asp329, His330, and His341.

This sequence belongs to the phosphopentomutase family. It depends on Mn(2+) as a cofactor.

Its subcellular location is the cytoplasm. It catalyses the reaction 2-deoxy-alpha-D-ribose 1-phosphate = 2-deoxy-D-ribose 5-phosphate. The catalysed reaction is alpha-D-ribose 1-phosphate = D-ribose 5-phosphate. It participates in carbohydrate degradation; 2-deoxy-D-ribose 1-phosphate degradation; D-glyceraldehyde 3-phosphate and acetaldehyde from 2-deoxy-alpha-D-ribose 1-phosphate: step 1/2. Isomerase that catalyzes the conversion of deoxy-ribose 1-phosphate (dRib-1-P) and ribose 1-phosphate (Rib-1-P) to deoxy-ribose 5-phosphate (dRib-5-P) and ribose 5-phosphate (Rib-5-P), respectively. This chain is Phosphopentomutase, found in Clostridium perfringens (strain 13 / Type A).